We begin with the raw amino-acid sequence, 435 residues long: MSSPGAESAGKSLQYRVDHLLSAVESELQAGSEKGDPTERELRVGLEDSELWLRFKELTNEMIVTKNGRRMFPVLKVNVSGLDPNAMYSFLLDFVAADNHRWKYVNGEWVPGGKPEPQAPSCVYIHPDSPNFGAHWMKAPVSFSKVKLTNKLNGGGQIMLNSLHKYEPRIHIVRVGGAQRMITSHCFPETQFIAVTAYQNEEITALKIKYNPFAKAFLDAKERSDHKDMMEEPGDSQQSGYSQWGWLIPGTSTLCPPATPHPQFGGPLSLPSTHGCERYPALRNHRPSPYPSPYAHRNNSPTYSDNPSACLSMLQSHDSWPSLGTPAHTSMLPMSHSAGPPTGSSQYPSLWSVSNGTITPGAQPAGMSNGLGAQFFRGSSAHGAPLGHAVPAPSASGSPLYEGAPTATDVPDSQYDASAQARLIASWTPVSPPSM.

The T-box DNA-binding region spans Leu51 to Asp219. 2 disordered regions span residues Pro280–Cys310 and Ala384–Asp412. Over residues Arg297–Cys310 the composition is skewed to polar residues.

In terms of assembly, monomer. Binds DNA as a monomer.

The protein localises to the nucleus. Involved in the transcriptional regulation of genes required for mesoderm formation and differentiation. Binds to a palindromic site (called T site) and activates gene transcription when bound to such a site. This is T-box transcription factor T from Canis lupus familiaris (Dog).